The chain runs to 544 residues: Tyrosine-protein kinase fynb (544 aa).

G2 carries the N-myristoyl glycine lipid modification. 2 S-palmitoyl cysteine lipidation sites follow: C3 and C6. In terms of domain architecture, SH3 spans 89-150 (TGVTLFVALY…PSNYVAPVDS (62 aa)). An SH2 domain is found at 156-253 (WYFGKLGRKD…GLCCRLVVPC (98 aa)). The 254-residue stretch at 278-531 (LQLIKRLGNG…YLQAFLEDYF (254 aa)) folds into the Protein kinase domain. ATP contacts are provided by residues 284–292 (LGNGQFGEV) and K306. D397 (proton acceptor) is an active-site residue. The residue at position 427 (Y427) is a Phosphotyrosine; by autocatalysis. Phosphotyrosine is present on Y538.

It belongs to the protein kinase superfamily. Tyr protein kinase family. SRC subfamily. Mn(2+) is required as a cofactor.

It localises to the cytoplasm. It carries out the reaction L-tyrosyl-[protein] + ATP = O-phospho-L-tyrosyl-[protein] + ADP + H(+). Its activity is regulated as follows. Inhibited by phosphorylation of Tyr-538 by leukocyte common antigen and activated by dephosphorylation of this site. Tyrosine-protein kinase implicated in the control of cell growth. Plays a role in the regulation of intracellular calcium levels. Required in brain development and mature brain function with important roles in the regulation of axon growth, axon guidance, and neurite extension. Role in CNTN1-mediated signaling. This Danio rerio (Zebrafish) protein is Tyrosine-protein kinase fynb (fynb).